A 158-amino-acid chain; its full sequence is Putative pre-16S rRNA nuclease (158 aa).

The protein belongs to the YqgF nuclease family.

The protein localises to the cytoplasm. Its function is as follows. Could be a nuclease involved in processing of the 5'-end of pre-16S rRNA. This is Putative pre-16S rRNA nuclease from Paracoccus denitrificans (strain Pd 1222).